The chain runs to 581 residues: MAMIGMNIIGLFMVLMLLLISLIILFACKPWRYFSRFRSSSRFSSTFKVGDLQRPLISDDGNLIQGQTSEVTREYDLEGACYQNDGLLHSSLTEGRFYKQRLPSSSPHFSQGESFVLEVISEPSDNALVGQTLKLPAEKGSLAEVQTYDWQNNRNENLQYNLEKDRLINLSPRLVEDQRSWLFLEVIAGPAIGLQHAVNSTSSSKLPVKLGRVSPSDLALKDSEVSGKHAQITWNSTKFKWELVDMGSLNGTLVNSHSISHPDLGSRKWGNPVELASDDIITLGTTTKVYVRISSQNEFQIPFKIGVASDPMAMRRGGRKLPMEDVCHYKWPLPGANKFGLFCVCDGHGGSGAAQSAIKIIPEVLANILSDSLRKEKVLSKRDASDVLRDMFAKTEARLEEHQYEGCTATVLLVWKDNEENFFAQCANLGDSACVIHLGGRYIQMTEDHRVVSLSERKRFQEAGLALRDGETRLFGINLARMLGDKFPKQQDSRFSAEPYISEPLRIDQSSKDVFAVLASDGLWDVVSPKKAVQLVLQMRDKERGRESSAEKIANGLLNEARAMRTKDNTSIIYLDFDTSL.

Residues 1 to 7 lie on the Extracellular side of the membrane; it reads MAMIGMN. A helical transmembrane segment spans residues 8–28; sequence IIGLFMVLMLLLISLIILFAC. Residues 29–581 are Cytoplasmic-facing; that stretch reads KPWRYFSRFR…IIYLDFDTSL (553 aa). Positions 208 to 259 constitute an FHA domain; it reads VKLGRVSPSDLALKDSEVSGKHAQITWNSTKFKWELVDMGSLNGTLVNSHSI. The PPM-type phosphatase domain maps to 304–577; the sequence is KIGVASDPMA…DNTSIIYLDF (274 aa). D346, G347, D521, and D568 together coordinate Mn(2+).

As to quaternary structure, association of RLK5 with kapp domain is dependent on phosphorylation of RLK5 and can be abolished by dephosphorylation. Interacts with SERK1 and CDC48A. Component of the SERK1 signaling complex, composed of KAPP, CDC48A, GRF6 or GRF7, SERK1, SERK2, SERK3/BAK1 and BRI1. Interacts with CLV1. Requires Mg(2+) as cofactor. Mn(2+) is required as a cofactor. In terms of tissue distribution, expressed in all tissues examined.

It localises to the cell membrane. The catalysed reaction is O-phospho-L-seryl-[protein] + H2O = L-seryl-[protein] + phosphate. It catalyses the reaction O-phospho-L-threonyl-[protein] + H2O = L-threonyl-[protein] + phosphate. Its function is as follows. Dephosphorylates the Ser/Thr receptor-like kinase RLK5. May function as a signaling component in a pathway involving RLK5. Binds and dephosphorylates CLAVATA1 (CLV1). Functions as a negative regulator of the CLV1 signaling in plant development. Dephosphorylates SERK1 receptor kinase on threonine residues in the A-loop. Dephosphorylation of SERK1 controls SERK1 internalization. Component of a signaling pathway which mediates adaptation to NaCl stress. Is not a component of the SALT OVERLY SENSITIVE (SOS) pathway. The chain is Protein phosphatase 2C 70 from Arabidopsis thaliana (Mouse-ear cress).